Consider the following 860-residue polypeptide: DNA mismatch repair protein MutS (860 aa).

Position 606–613 (glycine 606–serine 613) interacts with ATP.

This sequence belongs to the DNA mismatch repair MutS family.

Its function is as follows. This protein is involved in the repair of mismatches in DNA. It is possible that it carries out the mismatch recognition step. This protein has a weak ATPase activity. This Geobacillus sp. (strain WCH70) protein is DNA mismatch repair protein MutS.